The sequence spans 648 residues: Rab11 family-interacting protein 1 (648 aa).

Residues 1–129 (MSLAASAGRG…DQSRRKKQWY (129 aa)) form the C2 domain. Over residues 164 to 188 (SMKDKSRNPFGKLKDKIKGKNKDNT) the composition is skewed to basic and acidic residues. Disordered regions lie at residues 164 to 470 (SMKD…GRKG), 483 to 503 (VRRPEKDAVPVASQWGSSQNP), and 516 to 555 (VESKCEPKPPVPVPRTPQTRAVKPRPHPVKPMNTTAPKIT). A compositionally biased stretch (polar residues) spans 189–201 (SDTASAIVPSTTP). Phosphoserine occurs at positions 205, 209, and 237. 2 stretches are compositionally biased toward polar residues: residues 227–242 (PSLQKTPLSQSMSVLP) and 271–296 (SSASEVMSQKRTSSTDHTQPNQSNFS). 9 positions are modified to phosphoserine: Ser-304, Ser-319, Ser-343, Ser-345, Ser-347, Ser-349, Ser-360, Ser-361, and Ser-386. A compositionally biased stretch (polar residues) spans 314-323 (DSLSRSNVCI). 2 stretches are compositionally biased toward basic and acidic residues: residues 381 to 394 (SDRRLSDSSTKDSM) and 422 to 436 (ATKETKDSKKQESKK). Residue Ser-438 is modified to Phosphoserine. Over residues 445–454 (GKKDVAKGSE) the composition is skewed to basic and acidic residues. The 63-residue stretch at 576 to 638 (KKYQPSDPAF…EETPNILRVP (63 aa)) folds into the FIP-RBD domain. Residues 584-648 (AFAYAQLTHD…AQTGKKAGKM (65 aa)) form a necessary for interaction with RAB4A and RAB11A, subcellular location and endosomal recycling region.

As to quaternary structure, homooligomer. Interacts with RAB11A, RAB11B, RAB25, RAB4A and RAB14.

The protein resides in the recycling endosome. Its subcellular location is the cytoplasmic vesicle. In terms of biological role, a Rab11 effector protein involved in the endosomal recycling process. Also involved in controlling membrane trafficking along the phagocytic pathway and in phagocytosis. Interaction with RAB14 may function in the process of neurite formation. The chain is Rab11 family-interacting protein 1 from Rattus norvegicus (Rat).